Reading from the N-terminus, the 195-residue chain is CASP-like protein 2C2 (195 aa).

The Cytoplasmic segment spans residues 1 to 18 (MAATTAAAAVPGVVRAER). Residues 19-39 (LLRGGCVVMAATAALLLGFSA) traverse the membrane as a helical segment. Residues 40–57 (ETKTVLFVRKTAVAKDVQ) lie on the Extracellular side of the membrane. A helical membrane pass occupies residues 58–78 (ALWVLTVAAAAAAGYQFAQLV). Over 79 to 106 (RCMYCSSSGDAGAMAVAWTSFLLDKGCA) the chain is Cytoplasmic. The helical transmembrane segment at 107–127 (YVVFASTAAALQACMVGLIGV) threads the bilayer. Residues 128–145 (EALQWSKLCNIYTRFCEQ) lie on the Extracellular side of the membrane. A helical membrane pass occupies residues 146 to 166 (AAAGMLCSFLAAAGMAVLSAF). At 167 to 195 (SARRLFRLYSPAGHRRSCPRAAVLATSPH) the chain is on the cytoplasmic side.

The protein belongs to the Casparian strip membrane proteins (CASP) family. As to quaternary structure, homodimer and heterodimers.

The protein resides in the cell membrane. In Oryza sativa subsp. japonica (Rice), this protein is CASP-like protein 2C2.